A 347-amino-acid polypeptide reads, in one-letter code: D-alanine--D-alanine ligase (347 aa).

The region spanning 134 to 332 is the ATP-grasp domain; the sequence is KLYAKDLGVK…LAQSLPKTPK (199 aa). 161-216 contacts ATP; it reads LIGFNFPFIIKPSNAGSSLGVSVVKEEKELIYALDGAFEYSKEILIEPFIQGVKEY. Mg(2+) contacts are provided by D288, E300, and N302.

Belongs to the D-alanine--D-alanine ligase family. Mg(2+) serves as cofactor. The cofactor is Mn(2+).

The protein resides in the cytoplasm. The catalysed reaction is 2 D-alanine + ATP = D-alanyl-D-alanine + ADP + phosphate + H(+). The protein operates within cell wall biogenesis; peptidoglycan biosynthesis. Its function is as follows. Cell wall formation. The chain is D-alanine--D-alanine ligase from Helicobacter pylori (strain Shi470).